Consider the following 237-residue polypeptide: 3-oxoacyl-[acyl-carrier-protein] reductase (237 aa).

An N-acetylmethionine modification is found at methionine 1. NADP(+) is bound by residues 11–14 and 34–35; these read SRGI and RN. N6-acetyllysine is present on lysine 40. NADP(+) contacts are provided by residues aspartate 56 and 83–85; that span reads AAG. An N6-acetyllysine modification is found at lysine 96. Serine 135 serves as a coordination point for substrate. Residues tyrosine 148, lysine 152, and 181 to 183 each bind NADP(+); that span reads VHT. The active-site Proton acceptor is the tyrosine 148. Lysine 195 is modified (N6-acetyllysine).

This sequence belongs to the short-chain dehydrogenases/reductases (SDR) family. In terms of assembly, homotetramer (in vitro). Heterotetramer with HSD17B8; contains two molecules each of HSD17B8 and CBR4. Does not form homotetramers when HSD17B8 is coexpressed, only heterotetramers (in vitro). In terms of tissue distribution, detected in liver and kidney (at protein level). Displays the highest expression in neuronal and muscle tissues.

Its subcellular location is the mitochondrion matrix. It carries out the reaction a (3R)-hydroxyacyl-[ACP] + NADP(+) = a 3-oxoacyl-[ACP] + NADPH + H(+). It catalyses the reaction a quinone + NADPH + H(+) = a quinol + NADP(+). It functions in the pathway lipid metabolism; fatty acid biosynthesis. Functionally, component of the heterotetramer complex KAR (3-ketoacyl-[acyl carrier protein] reductase or 3-ketoacyl-[ACP] reductase) that forms part of the mitochondrial fatty acid synthase (mtFAS). Beta-subunit of the KAR heterotetramer complex, responsible for the 3-ketoacyl-ACP reductase activity of the mtFAS, reduces 3-oxoacyl-[ACP] to (3R)-hydroxyacyl-[ACP] in a NADPH-dependent manner with no chain length preference, thereby participating in mitochondrial fatty acid biosynthesis. The homotetramer has NADPH-dependent quinone reductase activity (in vitro), hence could play a role in protection against cytotoxicity of exogenous quinones. As a heterotetramer, it can also reduce 9,10-phenanthrenequinone, 1,4-benzoquinone and various other o-quinones and p-quinones (in vitro). This Homo sapiens (Human) protein is 3-oxoacyl-[acyl-carrier-protein] reductase (CBR4).